A 488-amino-acid polypeptide reads, in one-letter code: Ribulose bisphosphate carboxylase large chain 1 (488 aa).

Positions 128 and 178 each coordinate substrate. Lysine 180 acts as the Proton acceptor in catalysis. Substrate is bound at residue lysine 182. Lysine 206, aspartate 208, and glutamate 209 together coordinate Mg(2+). Lysine 206 carries the N6-carboxylysine modification. The active-site Proton acceptor is histidine 298. The substrate site is built by arginine 299, histidine 331, and serine 383.

Belongs to the RuBisCO large chain family. Type I subfamily. In terms of assembly, heterohexadecamer of 8 large chains and 8 small chains. Mg(2+) serves as cofactor.

It carries out the reaction 2 (2R)-3-phosphoglycerate + 2 H(+) = D-ribulose 1,5-bisphosphate + CO2 + H2O. The enzyme catalyses D-ribulose 1,5-bisphosphate + O2 = 2-phosphoglycolate + (2R)-3-phosphoglycerate + 2 H(+). Its function is as follows. RuBisCO catalyzes two reactions: the carboxylation of D-ribulose 1,5-bisphosphate, the primary event in carbon dioxide fixation, as well as the oxidative fragmentation of the pentose substrate. Both reactions occur simultaneously and in competition at the same active site. This chain is Ribulose bisphosphate carboxylase large chain 1, found in Nitrobacter hamburgensis (strain DSM 10229 / NCIMB 13809 / X14).